A 7785-amino-acid polypeptide reads, in one-letter code: Probable non-canonical nonribosomal peptide synthetase (NRPS) CymA (7785 aa).

3 consecutive Carrier domains span residues 487–562 (TARS…QRQE), 1908–1983 (HART…SEQQ), and 2958–3033 (SPGM…LEGG). O-(pantetheine 4'-phosphoryl)serine is present on residues Ser522, Ser1943, and Ser2993. One copy of the LRR 1 repeat lies at 3088 to 3111 (RLALADVVVRHEALRTVFAERAGN). Carrier domains are found at residues 3978-4053 (APRT…SEQQ), 5002-5077 (EPRT…LEAN), and 6389-6464 (GPRD…AQGS). Ser4013, Ser5037, and Ser6424 each carry O-(pantetheine 4'-phosphoryl)serine. Residues 6853-6875 (TGVSRVDLSVNAIETFDDHGLPA) form an LRR 2 repeat. Residues 7432-7507 (GPRTPQEEIL…QLAEQLGSDG (76 aa)) form the Carrier 7 domain. At Ser7467 the chain carries O-(pantetheine 4'-phosphoryl)serine.

Requires pantetheine 4'-phosphate as cofactor.

In terms of biological role, probable non-canonical nonribosomal peptide synthetase (NRPS); part of the gene cluster that mediates the biosynthesis of cyclic heptapeptides, known as cyclomarins and also of cyclic dipeptides, called cyclomarazines, which have both antimicrobial and cytotoxic effects. First, CymD catalyzes the reverse N-prenylation of monomeric L-tryptophan with dimethylallyl diphosphate (DMAPP) to form N-(1,1-dimethylallyl)-tryptophan (r-N-DMAT). The N-(1,1-dimethylallyl)-tryptophan produced by CymD is then combined with a range of standard and nonproteinogenic amino acid substrates to synthesize the peptides, a process that is probably catalyzed by the non-canonical nonribosomal peptide synthetase (NRPS), CymA. Other proteins in the cluster catalyze further modifications of the peptides including CymV which catalyzes the oxidation of olefinic cyclomarins and cyclomarazines to their respective epoxide derivatives. The protein is Probable non-canonical nonribosomal peptide synthetase (NRPS) CymA of Salinispora arenicola (strain CNS-205).